Reading from the N-terminus, the 341-residue chain is Glycerol-3-phosphate dehydrogenase [NAD(P)+] (341 aa).

NADPH contacts are provided by S14, F15, R35, and K108. Sn-glycerol 3-phosphate-binding residues include K108 and G136. A140 contacts NADPH. K191, D244, S254, R255, and N256 together coordinate sn-glycerol 3-phosphate. The Proton acceptor role is filled by K191. R255 provides a ligand contact to NADPH. NADPH-binding residues include V279 and E281.

The protein belongs to the NAD-dependent glycerol-3-phosphate dehydrogenase family.

Its subcellular location is the cytoplasm. The catalysed reaction is sn-glycerol 3-phosphate + NAD(+) = dihydroxyacetone phosphate + NADH + H(+). It catalyses the reaction sn-glycerol 3-phosphate + NADP(+) = dihydroxyacetone phosphate + NADPH + H(+). It functions in the pathway membrane lipid metabolism; glycerophospholipid metabolism. Functionally, catalyzes the reduction of the glycolytic intermediate dihydroxyacetone phosphate (DHAP) to sn-glycerol 3-phosphate (G3P), the key precursor for phospholipid synthesis. In Pseudomonas putida (strain ATCC 47054 / DSM 6125 / CFBP 8728 / NCIMB 11950 / KT2440), this protein is Glycerol-3-phosphate dehydrogenase [NAD(P)+].